Reading from the N-terminus, the 1063-residue chain is Structural polyprotein (1063 aa).

Residues 1 to 131 form a disordered region; sequence MASTTPITME…LGPPTNPFQA (131 aa). The segment at 30 to 69 is human C1QBP/SF2P32-binding; it reads GASQSRRPRPPRQRDSSTSGDDSGRDSGGPRRRRGNRGRG. S46 carries the post-translational modification Phosphoserine; by host. Residues 59-69 show a composition bias toward basic residues; it reads PRRRRGNRGRG. Positions 70–87 are enriched in basic and acidic residues; the sequence is QRRDWSRAPPPPEERQET. Residues 93–107 are compositionally biased toward pro residues; it reads APKPSRAPPQQPQPP. A disulfide bridge connects residues C153 and C197. The functions as E2 signal peptide stretch occupies residues 279–300; sequence GAPQAFLAGLLLATVAVGTARA. Residues 301-534 are Extracellular-facing; that stretch reads GLQPRADMAA…LWLATANALS (234 aa). N-linked (GlcNAc...) asparagine; by host glycosylation is found at N353, N371, N410, and N429. The chain crosses the membrane as a helical span at residues 535-555; it reads LDHALAAFVLLVPWVLIFMVC. Topologically, residues 556–582 are cytoplasmic; the sequence is RRACRRRGAAAALTAVVLQGYNPPAYG. The tract at residues 563–582 is functions as E1 signal peptide; the sequence is GAAAALTAVVLQGYNPPAYG. Residues 583–1028 are Extracellular-facing; the sequence is EEAFTYLCTA…QTWAEWAAAH (446 aa). Cystine bridges form between C590–C595, C619–C824, C641–C653, C699–C712, C758–C767, C807–C817, C931–C934, and C950–C983. N658 is a glycosylation site (N-linked (GlcNAc...) asparagine; by host). Positions 670 and 671 each coordinate Ca(2+). Positions 718 and 719 each coordinate Ca(2+). 2 N-linked (GlcNAc...) asparagine; by host glycosylation sites follow: N759 and N791. O-linked (GalNAc...) threonine; by host glycans are attached at residues T1011 and T1012. The chain crosses the membrane as a helical span at residues 1029–1049; sequence WWQLTLGAICALPLAGLLACC. Topologically, residues 1050 to 1063 are extracellular; the sequence is AKCLYYLRGAIAPR.

Homodimer; further assembles into homooligomer. Interacts with human C1QBP. Interacts (via N-terminus) with protease/methyltransferase p150. In terms of assembly, heterodimer with spike glycoprotein E2. As to quaternary structure, heterodimer with spike glycoprotein E1. Structural polyprotein: Specific enzymatic cleavages in vivo yield mature proteins. Two signal peptidase-mediated cleavages within the polyprotein produce the structural proteins capsid, E2, and E1. The E2 signal peptide remains attached to the C-terminus of the capsid protein after cleavage by the signal peptidase. Another signal peptide at E2 C-terminus directs E1 to the ER, with a similar mechanism. Post-translationally, contains three N-linked oligosaccharides. In terms of processing, capsid is phosphorylated on Ser-46 by host. This phosphorylation negatively regulates capsid protein RNA-binding activity. Dephosphorylated by human PP1A.

It localises to the virion. The protein localises to the host cytoplasm. The protein resides in the host mitochondrion. It is found in the virion membrane. Its subcellular location is the host Golgi apparatus membrane. Capsid protein interacts with genomic RNA and assembles into icosahedric core particles 65-70 nm in diameter. The resulting nucleocapsid eventually associates with the cytoplasmic domain of E2 at the cell membrane, leading to budding and formation of mature virions from host Golgi membranes. Phosphorylation negatively regulates RNA-binding activity, possibly delaying virion assembly during the viral replication phase. Capsid protein dimerizes and becomes disulfide-linked in the virion. Modulates genomic RNA replication. Modulates subgenomic RNA synthesis by interacting with human C1QBP/SF2P32. Induces both perinuclear clustering of mitochondria and the formation of electron-dense intermitochondrial plaques, both hallmarks of rubella virus infected cells. Induces apoptosis when expressed in transfected cells. In terms of biological role, responsible for viral attachment to target host cell, by binding to the cell receptor. Its transport to the plasma membrane depends on interaction with E1 protein. The surface glycoproteins display an irregular helical organization and a pseudo-tetrameric inner nucleocapsid arrangement. Its function is as follows. Class II viral fusion protein. Fusion activity is inactive as long as E1 is bound to E2 in mature virion. After virus attachment to target cell and clathrin-mediated endocytosis, acidification of the endosome would induce dissociation of E1/E2 heterodimer and concomitant trimerization of the E1 subunits. This E1 homotrimer is fusion active, and promotes release of viral nucleocapsid in cytoplasm after endosome and viral membrane fusion. The cytoplasmic tail of spike glycoprotein E1 modulates virus release. The surface glycoproteins display an irregular helical organization and a pseudo-tetrameric inner nucleocapsid arrangement. The sequence is that of Structural polyprotein from Rubella virus (strain Therien) (RUBV).